A 322-amino-acid chain; its full sequence is Dioxygenase himG (322 aa).

Fe cation-binding residues include His-148 and His-229.

This sequence belongs to the PhyH family. Homodimer. Fe cation serves as cofactor.

The protein operates within secondary metabolite biosynthesis. Its function is as follows. Polyketide synthase-nonribosomal peptide synthetase; part of the him gene cluster that mediates the biosynthesis of himeic acid A, a ubiquitin-activating enzyme (E1) inhibitor. First, himA, together with the trans-enoyl reductase himH, catalyzes the formation of apolyketide chain, which is then condensed with leucine by the NRPS activity of himA. Dieckmann cyclization and release from himA gives a tetramic acid intermediate as the product of himA PKS-NRPS. HimG then catalyzes alpha-oxidation of the tetramic acid ring, with a subsequent rearrangement to yield apyrone intermediate. Two terminal methyl groups of polyketide and amide side chains are oxidized to carboxylic acids by himC cytochrome P450 monooxygenase to form himeic acid A. Himeic acid A is further converted to himeic acid B and C during culture growth. No gene responsible for pyrone to pyridone conversion was found in the him gene cluster and himeic acid A is non-enzymatically converted to himeic acid C by the incorporation of an ammonium nitrogen atom in a pH5 buffer, and to himeic acid B at a conversion ratio of 50% during incubation in MeOH for 5 days. The protein is Dioxygenase himG of Aspergillus japonicus.